A 111-amino-acid polypeptide reads, in one-letter code: NADH-ubiquinone oxidoreductase chain 3 (111 aa).

Transmembrane regions (helical) follow at residues 2–22 (ILIW…GMFV), 54–74 (FFVI…LLPM), and 82–102 (PTTY…FYEW).

It belongs to the complex I subunit 3 family.

The protein resides in the mitochondrion membrane. It carries out the reaction a ubiquinone + NADH + 5 H(+)(in) = a ubiquinol + NAD(+) + 4 H(+)(out). Core subunit of the mitochondrial membrane respiratory chain NADH dehydrogenase (Complex I) that is believed to belong to the minimal assembly required for catalysis. Complex I functions in the transfer of electrons from NADH to the respiratory chain. The immediate electron acceptor for the enzyme is believed to be ubiquinone. The sequence is that of NADH-ubiquinone oxidoreductase chain 3 (ND3) from Artemia franciscana (Brine shrimp).